We begin with the raw amino-acid sequence, 37 residues long: Brevinin-2DYe (37 aa).

Cysteines 31 and 37 form a disulfide.

Expressed by the skin glands.

It is found in the secreted. Its function is as follows. Antimicrobial peptide. Active against the Gram-positive bacterium S.aureus (MIC=15 uM) and the Gram-negative bacterium E.coli (MIC=30 uM). The polypeptide is Brevinin-2DYe (Rana dybowskii (Dybovsky's frog)).